Reading from the N-terminus, the 239-residue chain is Probable transcriptional regulatory protein VC_A0006 (239 aa).

This sequence belongs to the TACO1 family.

It localises to the cytoplasm. This Vibrio cholerae serotype O1 (strain ATCC 39315 / El Tor Inaba N16961) protein is Probable transcriptional regulatory protein VC_A0006.